The following is a 348-amino-acid chain: Phosphate acyltransferase (348 aa).

This sequence belongs to the PlsX family. As to quaternary structure, homodimer. Probably interacts with PlsY.

Its subcellular location is the cytoplasm. The catalysed reaction is a fatty acyl-[ACP] + phosphate = an acyl phosphate + holo-[ACP]. Its pathway is lipid metabolism; phospholipid metabolism. In terms of biological role, catalyzes the reversible formation of acyl-phosphate (acyl-PO(4)) from acyl-[acyl-carrier-protein] (acyl-ACP). This enzyme utilizes acyl-ACP as fatty acyl donor, but not acyl-CoA. This Francisella philomiragia subsp. philomiragia (strain ATCC 25017 / CCUG 19701 / FSC 153 / O#319-036) protein is Phosphate acyltransferase.